A 578-amino-acid chain; its full sequence is MALRLGVSIGAALGSSHWDDGQRVRQRDFSASVNFTAPVTSRRSLRGSRTGVRILRVSNEGRESYLDMWKNAVDREKKEKAFEKIAENVVAVDGEKEKGGDLEKKSDEFQKILEVSVEERDRIQRMQVVDRAAAAISAARAILASNNSGDGKEGFPNEDNTVTSEVTETPKNAKLGMWSRTVYVPRSETSGTETPGPDFWSWTPPQGSEISSVDLQAVEKPAEFPTLPNPVLEKDKSADSLSIPYESMLSSERHSFTIPPFESLIEVRKEAETKPSSETLSTEHDLDLISSANAEEVARVLDSLDESSTHGVSEDGLKWWKQTGVEKRPDGVVCRWTMIRGVTADGVVEWQDKYWEASDDFGFKELGSEKSGRDATGNVWREFWRESMSQENGVVHMEKTADKWGKSGQGDEWQEKWWEHYDATGKSEKWAHKWCSIDRNTPLDAGHAHVWHERWGEKYDGQGGSTKYTDKWAERWVGDGWDKWGDKWDENFNPSAQGVKQGETWWEGKHGDRWNRSWGEGHNGSGWVHKYGKSSSGEHWDTHVPQETWYEKFPHFGFFHCFDNSVQLRAVKKPSDMS.

Residues 1-56 (MALRLGVSIGAALGSSHWDDGQRVRQRDFSASVNFTAPVTSRRSLRGSRTGVRILR) constitute a chloroplast transit peptide. Disordered stretches follow at residues 146–166 (NNSGDGKEGFPNEDNTVTSEV) and 187–206 (SETSGTETPGPDFWSWTPPQ).

Belongs to the ESV1 family. As to expression, expressed ubiquitously.

The protein localises to the plastid. Its subcellular location is the chloroplast stroma. Functionally, binds preferentially to highly ordered alpha-glucans, such as starch and crystalline maltodextrins. Involved in the organization of the starch granule matrix, thus influencing starch turnover by modulating the accessibility of starch polymers to modifying and degrading enzymes involved in phosphorylation, hydrolyzes and synthesis, including starch synthases (SSI and SSIII), starch phosphorylases (PHS1), isoamylase, beta-amylase, glucan water dikinase (GWD) and phosphoglucan water dikinase (PWD). This Arabidopsis thaliana (Mouse-ear cress) protein is Protein LIKE EARLY STARVATION, chloroplastic.